The sequence spans 203 residues: Glycerol-3-phosphate acyltransferase (203 aa).

The next 4 membrane-spanning stretches (helical) occupy residues 6–26 (LTLLMIVAAYLAGSVSSAVLV), 82–102 (AISLGLIAIAACLGHIYPIFF), 118–138 (APIGDDLAICLMASWVVLVLI), and 141–161 (YSSLAAIITALLAPLYTWWLD).

Belongs to the PlsY family. In terms of assembly, probably interacts with PlsX.

Its subcellular location is the cell inner membrane. It carries out the reaction an acyl phosphate + sn-glycerol 3-phosphate = a 1-acyl-sn-glycero-3-phosphate + phosphate. It participates in lipid metabolism; phospholipid metabolism. Catalyzes the transfer of an acyl group from acyl-phosphate (acyl-PO(4)) to glycerol-3-phosphate (G3P) to form lysophosphatidic acid (LPA). This enzyme utilizes acyl-phosphate as fatty acyl donor, but not acyl-CoA or acyl-ACP. In Shewanella sp. (strain MR-7), this protein is Glycerol-3-phosphate acyltransferase.